A 472-amino-acid chain; its full sequence is Carboxypeptidase Q (472 aa).

The signal sequence occupies residues M1–G20. Residues K21–G44 constitute a propeptide that is removed on maturation. N-linked (GlcNAc...) asparagine glycans are attached at residues N61 and N179. Residues H290 and D302 each contribute to the Zn(2+) site. E336 (nucleophile) is an active-site residue. E337 provides a ligand contact to Zn(2+). Residues N353 and N356 are each glycosylated (N-linked (GlcNAc...) asparagine). A Zn(2+)-binding site is contributed by D364. The N-linked (GlcNAc...) asparagine glycan is linked to N396. H434 serves as a coordination point for Zn(2+).

Belongs to the peptidase M28 family. In terms of assembly, homodimer. The monomeric form is inactive while the homodimer is active. N-glycosylated. The secreted form is modified by hybrid or complex type oligosaccharide chains.

Its subcellular location is the endoplasmic reticulum. It is found in the golgi apparatus. The protein localises to the lysosome. It localises to the secreted. In terms of biological role, carboxypeptidase that may play an important role in the hydrolysis of circulating peptides. Catalyzes the hydrolysis of dipeptides with unsubstituted terminals into amino acids. May play a role in the liberation of thyroxine hormone from its thyroglobulin (Tg) precursor. This is Carboxypeptidase Q (CPQ) from Pongo abelii (Sumatran orangutan).